Here is a 1097-residue protein sequence, read N- to C-terminus: U3 small nucleolar RNA-associated protein 22 (1097 aa).

Composition is skewed to basic and acidic residues over residues 1–10 (MNGLKREHES) and 18–27 (KTPETEYDSH). The interval 1–27 (MNGLKREHESSSSQDGSKTPETEYDSH) is disordered.

This sequence belongs to the NRAP family. Component of the ribosomal small subunit (SSU) processome.

The protein resides in the nucleus. It localises to the nucleolus. Involved in nucleolar processing of pre-18S ribosomal RNA and ribosome assembly. The chain is U3 small nucleolar RNA-associated protein 22 from Schizosaccharomyces pombe (strain 972 / ATCC 24843) (Fission yeast).